The following is a 330-amino-acid chain: MSSAVASKGMNQGSEFDDNKDMCPICKTDRYLSPDVRFLVNPECYHKICESCVDRIFSLGPAPCPYKSCDKILRKNKFKTQIFDDVGVEKEVDIRKRVFNVFNKTLEDFDNDLEAYNKYLEEVEDIVYKLDNKIDVVETEEKLRTYEELNKQLIMNNMERSKKDLENFEQRQQFEKEMRMKKRMLERQIESEDKMNKEWAKREIVNRLASSTNADDVIEGVKNTVKLKKSSARRKLEEINRVLQNNPYSSLMLSQGLSRKEDNVPFTPFNGDRDLDKRYTIDQESYDDPFIKDLENRKDYIASGFRSDFVYDRMLTEAFMGLGCVVAEEV.

An RING-type zinc finger spans residues 23–68 (CPICKTDRYLSPDVRFLVNPECYHKICESCVDRIFSLGPAPCPYKS).

The protein localises to the nucleus. In terms of biological role, acts as a component of the general transcription and DNA repair factor IIH (TFIIH or factor B), which is essential for both basal and activated transcription, and is involved in nucleotide excision repair (NER) of damaged DNA. TFIIH as CTD kinase activity and DNA-dependent ATPase activity, and is essential for polymerase II transcription. The polypeptide is RNA polymerase II transcription factor B subunit 3 (TFB3) (Candida glabrata (strain ATCC 2001 / BCRC 20586 / JCM 3761 / NBRC 0622 / NRRL Y-65 / CBS 138) (Yeast)).